The chain runs to 245 residues: tRNA (guanine-N(1)-)-methyltransferase (245 aa).

S-adenosyl-L-methionine is bound by residues G111 and 130 to 135; that span reads IGDYVL.

It belongs to the RNA methyltransferase TrmD family. As to quaternary structure, homodimer.

It is found in the cytoplasm. The enzyme catalyses guanosine(37) in tRNA + S-adenosyl-L-methionine = N(1)-methylguanosine(37) in tRNA + S-adenosyl-L-homocysteine + H(+). In terms of biological role, specifically methylates guanosine-37 in various tRNAs. The protein is tRNA (guanine-N(1)-)-methyltransferase of Dictyoglomus turgidum (strain DSM 6724 / Z-1310).